Consider the following 285-residue polypeptide: 3-methyl-2-oxobutanoate hydroxymethyltransferase (285 aa).

The segment at 1–22 (MSEHNVYGAAQPAQPGQPAQPR) is disordered. A compositionally biased stretch (low complexity) spans 8–21 (GAAQPAQPGQPAQP). 2 residues coordinate Mg(2+): aspartate 66 and aspartate 105. 3-methyl-2-oxobutanoate contacts are provided by residues 66–67 (DS), aspartate 105, and lysine 135. Glutamate 137 provides a ligand contact to Mg(2+). Glutamate 203 acts as the Proton acceptor in catalysis.

It belongs to the PanB family. Homodecamer; pentamer of dimers. The cofactor is Mg(2+).

It localises to the cytoplasm. The enzyme catalyses 3-methyl-2-oxobutanoate + (6R)-5,10-methylene-5,6,7,8-tetrahydrofolate + H2O = 2-dehydropantoate + (6S)-5,6,7,8-tetrahydrofolate. The protein operates within cofactor biosynthesis; (R)-pantothenate biosynthesis; (R)-pantoate from 3-methyl-2-oxobutanoate: step 1/2. Catalyzes the reversible reaction in which hydroxymethyl group from 5,10-methylenetetrahydrofolate is transferred onto alpha-ketoisovalerate to form ketopantoate. The polypeptide is 3-methyl-2-oxobutanoate hydroxymethyltransferase (Mycolicibacterium paratuberculosis (strain ATCC BAA-968 / K-10) (Mycobacterium paratuberculosis)).